Here is a 228-residue protein sequence, read N- to C-terminus: Outer membrane protein assembly factor BamE (228 aa).

The first 29 residues, 1–29 (MNPILKGVYSPARLGVVALTLFGILGVTG), serve as a signal peptide directing secretion. The N-palmitoyl cysteine moiety is linked to residue C30. C30 is lipidated: S-diacylglycerol cysteine. The segment at 197–228 (DFFGSSKKDPDPQSPQLGPGTLNDVPKPADSK) is disordered.

This sequence belongs to the BamE family. In terms of assembly, part of the Bam complex.

It is found in the cell outer membrane. Functionally, part of the outer membrane protein assembly complex, which is involved in assembly and insertion of beta-barrel proteins into the outer membrane. This is Outer membrane protein assembly factor BamE from Polynucleobacter necessarius subsp. necessarius (strain STIR1).